The following is a 228-amino-acid chain: 7-cyano-7-deazaguanine synthase (228 aa).

9-19 (LSGGPDSTTVL) serves as a coordination point for ATP. Zn(2+) is bound by residues Cys193, Cys203, Cys206, and Cys209.

Belongs to the QueC family. Requires Zn(2+) as cofactor.

The enzyme catalyses 7-carboxy-7-deazaguanine + NH4(+) + ATP = 7-cyano-7-deazaguanine + ADP + phosphate + H2O + H(+). It participates in purine metabolism; 7-cyano-7-deazaguanine biosynthesis. In terms of biological role, catalyzes the ATP-dependent conversion of 7-carboxy-7-deazaguanine (CDG) to 7-cyano-7-deazaguanine (preQ(0)). The chain is 7-cyano-7-deazaguanine synthase from Rickettsia massiliae (strain Mtu5).